The sequence spans 725 residues: MEYKYSTIVDSSKWDPEGLIEGIPLRKHEAGDLEEVGSFRVQEDWRRLVGPVENPFRGSLGPEISFITYTVPECLPERLEAISYGLDYGFLHDDEIDTKIEEAELDDVGAALAQGGSTGKIQEGTKSSGKRKMAAQLLREMMALDPERAMTLAKSWAQGVQHSARRVEEKDWKSLDEYIPFRCMDLGYMHWHGLVTFGCAITVPEEEEEERRTLLEPAVIACLMTNDLFSYEKEKNDNNPQNAVAVIMKIHKCSEEEARDICKQRIRLECRKYARIVKETLARTDISLDLKRYIEIMQYTVSGNWAWSTQCPRYHADAKFNELQMLRAEHGVAKYPARYSLENRKNGANGVNGVNGINGVNGVNGVNGKRKRSGEETADDARTNGNGIKKPAHVLEYRDSLVLEDIVALSLDWNLPDLSDGVVVQPYKYLTSLPSKGFRDQAIDSLNTWLRVPTKTTKMIKDVIKMLHSASLMLDDIEDNSPLRRGKPSTHVIYGNAQTINSATYQYTEATGLAARLPNPTSLRIYLEEVQQLYIGQSYDLYWTHNALCPSIPEYLKMVDQKTGGLFRMLTRLMVSESPARSSILDQTLYPLSHLIGRFFQIRDDYQNLASAEYARQKGYAEDLDEGKYSFTLIHCINTLEAEASLASEKMALRAFLIKRRVDSSLSNESKREVLDIMKKTKSLEYTLGVLRALQAELEKEVDSLEAKFGEENFSLRMMLELLKV.

The segment at 1 to 322 (MEYKYSTIVD…RYHADAKFNE (322 aa)) is (7Z)-ophiobola-7,19-dien-3-ol synthase. Aspartate 93 and aspartate 97 together coordinate Mg(2+). Residue aspartate 93 coordinates substrate. The DDXXD 1 signature appears at 93–97 (DDEID). Substrate-binding positions include 182 to 185 (RCMD), asparagine 226, 230 to 234 (SYEKE), and 313 to 314 (RY). Residues 226 to 234 (NDLFSYEKE) carry the NSE/DTE motif. The geranylfarnesyl diphosphate synthase stretch occupies residues 323–725 (LQMLRAEHGV…LRMMLELLKV (403 aa)). A disordered region spans residues 362-388 (GVNGVNGKRKRSGEETADDARTNGNGI). Residues 373-382 (SGEETADDAR) show a composition bias toward basic and acidic residues. Residues lysine 436, arginine 439, and histidine 468 each contribute to the isopentenyl diphosphate site. Mg(2+)-binding residues include aspartate 475 and aspartate 479. The short motif at 475-479 (DDIED) is the DDXXD 2 element. Arginine 484 contributes to the dimethylallyl diphosphate binding site. Arginine 485 contacts isopentenyl diphosphate. Residues lysine 562, threonine 563, glutamine 601, asparagine 608, lysine 618, and lysine 628 each contribute to the dimethylallyl diphosphate site.

It in the N-terminal section; belongs to the terpene synthase family. This sequence in the C-terminal section; belongs to the FPP/GGPP synthase family. The cofactor is Mg(2+).

The enzyme catalyses isopentenyl diphosphate + (2E,6E)-farnesyl diphosphate = (2E,6E,10E)-geranylgeranyl diphosphate + diphosphate. The catalysed reaction is isopentenyl diphosphate + (2E,6E,10E)-geranylgeranyl diphosphate = (2E,6E,10E,14E)-geranylfarnesyl diphosphate + diphosphate. It catalyses the reaction (2E,6E,10E,14E)-geranylfarnesyl diphosphate + H2O = ophiobolin F + diphosphate. It functions in the pathway secondary metabolite biosynthesis; terpenoid biosynthesis. Bifunctional sesterterpene synthase that converts isopentenyl diphosphate (IPP) and dimethylallyl diphosphate (DMAPP) into ophiobolin F. The C-terminal prenyltransferase (PT) domain of AcldOS converts isopentenyl diphosphate and dimethylallyl diphosphate into geranylfarnesyl diphosphate (GFPP), whereas the N-terminal terpene cyclase (TC) domain catalyzes the cyclization of GFPP to ophiobolin F. This Aspergillus calidoustus protein is Ophiobolin F synthase.